The chain runs to 183 residues: Large ribosomal subunit protein uL22 (183 aa).

Belongs to the universal ribosomal protein uL22 family.

This is Large ribosomal subunit protein uL22 (RPL17) from Podocoryna carnea (Hydrozoan).